Consider the following 239-residue polypeptide: Transcriptional regulatory protein BtsR (239 aa).

The region spanning 3–116 (KVLIVDDEPL…RLEKTLHRLR (114 aa)) is the Response regulatory domain. At D54 the chain carries 4-aspartylphosphate. An HTH LytTR-type domain is found at 137 to 239 (IPCTGHSRIY…LKSLKEAIGL (103 aa)).

Post-translationally, phosphorylated by BtsS.

Its function is as follows. Member of the two-component regulatory system BtsS/BtsR. BtsR regulates expression of btsT by binding to its promoter region. The polypeptide is Transcriptional regulatory protein BtsR (Salmonella typhimurium (strain LT2 / SGSC1412 / ATCC 700720)).